Consider the following 319-residue polypeptide: Plastid lipid-associated protein 2, chloroplastic (319 aa).

The transit peptide at Met-1 to Arg-59 directs the protein to the chloroplast. The disordered stretch occupies residues Gln-17 to Thr-39. A compositionally biased stretch (low complexity) spans Ser-18–Ser-36.

Belongs to the PAP/fibrillin family. In terms of tissue distribution, expressed almost exclusively in petals. Very weak expression in all other organs.

Its subcellular location is the plastid. The protein localises to the chloroplast. May stabilize the accumulated carotenoid structures. This Brassica campestris (Field mustard) protein is Plastid lipid-associated protein 2, chloroplastic (PAP2).